The sequence spans 316 residues: N-acetylmuramic acid 6-phosphate etherase (316 aa).

The 164-residue stretch at isoleucine 68–lysine 231 folds into the SIS domain. Glutamate 96 (proton donor) is an active-site residue. Glutamate 127 is a catalytic residue.

This sequence belongs to the GCKR-like family. MurNAc-6-P etherase subfamily. Homodimer.

The enzyme catalyses N-acetyl-D-muramate 6-phosphate + H2O = N-acetyl-D-glucosamine 6-phosphate + (R)-lactate. The protein operates within amino-sugar metabolism; N-acetylmuramate degradation. Specifically catalyzes the cleavage of the D-lactyl ether substituent of MurNAc 6-phosphate, producing GlcNAc 6-phosphate and D-lactate. This is N-acetylmuramic acid 6-phosphate etherase from Prochlorococcus marinus (strain MIT 9303).